Here is a 787-residue protein sequence, read N- to C-terminus: Ribonucleoside-diphosphate reductase large subunit (787 aa).

Substrate-binding positions include threonine 209, 224 to 225, glycine 255, 436 to 440, and 618 to 622; these read SC, NLCTE, and PTVSS. Cysteines 225 and 453 form a disulfide. Residue asparagine 436 is the Proton acceptor of the active site. Cysteine 438 acts as the Cysteine radical intermediate in catalysis. Catalysis depends on glutamate 440, which acts as the Proton acceptor.

Belongs to the ribonucleoside diphosphate reductase large chain family. As to quaternary structure, heterotetramer composed of a homodimer of the large subunit (R1) and a homodimer of the small subunit (R2). Larger multisubunit protein complex are also active, composed of (R1)n(R2)n.

The catalysed reaction is a 2'-deoxyribonucleoside 5'-diphosphate + [thioredoxin]-disulfide + H2O = a ribonucleoside 5'-diphosphate + [thioredoxin]-dithiol. In terms of biological role, ribonucleoside-diphosphate reductase holoenzyme provides the precursors necessary for viral DNA synthesis. Allows virus growth in non-dividing cells, as well as reactivation from latency in infected hosts. Catalyzes the biosynthesis of deoxyribonucleotides from the corresponding ribonucleotides. The polypeptide is Ribonucleoside-diphosphate reductase large subunit (Bos taurus (Bovine)).